The primary structure comprises 641 residues: Hemagglutinin-esterase-fusion glycoprotein (641 aa).

Positions 1–26 are fusion domain-1; the sequence is EKIKICLQKQVNSSFSLHNGFGGNLY. At 1-616 the chain is on the extracellular side; it reads EKIKICLQKQ…QSDPFYWGSS (616 aa). 7 cysteine pairs are disulfide-bonded: Cys6–Cys569, Cys106–Cys151, Cys126–Cys174, Cys196–Cys238, Cys215–Cys302, Cys223–Cys275, and Cys332–Cys338. Asn12 and Asn47 each carry an N-linked (GlcNAc...) asparagine; by host glycan. Positions 27–137 are esterase domain-1; the sequence is ATEEKRMFEL…RKNWTDIKLN (111 aa). Ser57 functions as the Nucleophile in the catalytic mechanism. The N-linked (GlcNAc...) asparagine; by host glycan is linked to Asn130. The tract at residues 137–296 is N-acetyl-9-O-acetylneuraminic acid binding; sequence NFQKNIYELA…VRSSPRFLLM (160 aa). The segment at 297–351 is esterase domain-2; sequence PERSYCFDMKEKGPVTAVQSIWGKDRKSDYAVDQACLSTPGCMLIQKQKPYTGEA. Catalysis depends on charge relay system residues Asp352 and His355. The fusion domain-2 stretch occupies residues 352 to 637; that stretch reads DDHHGDQEMR…AALVISGIAI (286 aa). An N-linked (GlcNAc...) asparagine; by host glycan is attached at Asn381. The chain crosses the membrane as a helical span at residues 617–637; that stretch reads LGLAITAAISLAALVISGIAI. Residues 638–641 are Cytoplasmic-facing; it reads CRTK.

It belongs to the influenza type C/coronaviruses hemagglutinin-esterase family. Homotrimer of disulfide-linked HEF1-HEF2. Post-translationally, in natural infection, inactive HEF is matured into HEF1 and HEF2 outside the cell by one or more trypsin-like, arginine-specific endoprotease.

Its subcellular location is the virion membrane. It localises to the host cell membrane. It carries out the reaction N-acetyl-9-O-acetylneuraminate + H2O = N-acetylneuraminate + acetate + H(+). The catalysed reaction is N-acetyl-4-O-acetylneuraminate + H2O = N-acetylneuraminate + acetate + H(+). Binds to the N-acetyl-9-O-acetylneuraminic acid residues on the cell surface, bringing about the attachment of the virus particle to the cell. Plays a major role in the determination of host range restriction and virulence. Class I viral fusion protein. Responsible for penetration of the virus into the cell cytoplasm by mediating the fusion of the membrane of the endocytosed virus particle with the endosomal membrane. Low pH in endosomes induce an irreversible conformational change in HEF2, releasing the fusion hydrophobic peptide. Several trimers are required to form a competent fusion pore. Displays a receptor-destroying activity which is a neuraminidate-O-acetyl esterase. This activity cleaves off any receptor on the cell surface, which would otherwise prevent virions release. These cleavages prevent self-aggregation and ensure the efficient spread of the progeny virus from cell to cell. The polypeptide is Hemagglutinin-esterase-fusion glycoprotein (HE) (Influenza C virus (strain C/Kyoto/41/1982)).